We begin with the raw amino-acid sequence, 247 residues long: MRLVLVRHGESEWNKLNLFTGWTDVDLSEKGVEEAKEGGTYLKKEGFDFDICYTSYLKRAIHTLNYILSQMDREWLPVIKTWKLNERHYGGLQGLNKAETAEKYGEDQVKIWRRSFDIAPPVLEEGDKRCPYLQEQYRGIEKSELPLTESLKDTIARAVPFFEKTIKPQMLEGKRILITAHGNSLRALVKYFENLSDEEIISVNIPTGVPLVYEFDKNFKVLSKRYLGDQEKINAKINAVANQGKKK.

Substrate contacts are provided by residues 7–14, 20–21, arginine 59, 86–89, lysine 97, 113–114, and 182–183; these read RHGESEWN, TG, ERHY, RR, and GN. The Tele-phosphohistidine intermediate role is filled by histidine 8. Glutamate 86 (proton donor/acceptor) is an active-site residue.

The protein belongs to the phosphoglycerate mutase family. BPG-dependent PGAM subfamily.

The enzyme catalyses (2R)-2-phosphoglycerate = (2R)-3-phosphoglycerate. Its pathway is carbohydrate degradation; glycolysis; pyruvate from D-glyceraldehyde 3-phosphate: step 3/5. Its function is as follows. Catalyzes the interconversion of 2-phosphoglycerate and 3-phosphoglycerate. This chain is 2,3-bisphosphoglycerate-dependent phosphoglycerate mutase, found in Treponema denticola (strain ATCC 35405 / DSM 14222 / CIP 103919 / JCM 8153 / KCTC 15104).